Reading from the N-terminus, the 235-residue chain is Large ribosomal subunit protein uL1 (235 aa).

Belongs to the universal ribosomal protein uL1 family. In terms of assembly, part of the 50S ribosomal subunit.

Its function is as follows. Binds directly to 23S rRNA. The L1 stalk is quite mobile in the ribosome, and is involved in E site tRNA release. In terms of biological role, protein L1 is also a translational repressor protein, it controls the translation of the L11 operon by binding to its mRNA. In Synechococcus sp. (strain WH7803), this protein is Large ribosomal subunit protein uL1.